A 200-amino-acid chain; its full sequence is Prolactin (200 aa).

3 disulfides stabilise this stretch: cysteine 4–cysteine 11, cysteine 59–cysteine 175, and cysteine 192–cysteine 200.

It belongs to the somatotropin/prolactin family. Pituitary gland.

The protein localises to the secreted. The chain is Prolactin (prl) from Protopterus aethiopicus (Marbled lungfish).